We begin with the raw amino-acid sequence, 131 residues long: Holo-[acyl-carrier-protein] synthase (131 aa).

2 residues coordinate Mg(2+): Asp-8 and Glu-63.

It belongs to the P-Pant transferase superfamily. AcpS family. The cofactor is Mg(2+).

It localises to the cytoplasm. It catalyses the reaction apo-[ACP] + CoA = holo-[ACP] + adenosine 3',5'-bisphosphate + H(+). Functionally, transfers the 4'-phosphopantetheine moiety from coenzyme A to a Ser of acyl-carrier-protein. This is Holo-[acyl-carrier-protein] synthase from Shewanella halifaxensis (strain HAW-EB4).